A 921-amino-acid chain; its full sequence is Valine--tRNA ligase (921 aa).

Residues 40–50 (PNVTGSLHMGH) carry the 'HIGH' region motif. Residues 522–526 (KMSKS) carry the 'KMSKS' region motif. Residue lysine 525 participates in ATP binding. Positions 849 to 921 (MADLIDKEAE…LQHKNRIESL (73 aa)) form a coiled coil.

Belongs to the class-I aminoacyl-tRNA synthetase family. ValS type 1 subfamily. In terms of assembly, monomer.

Its subcellular location is the cytoplasm. It carries out the reaction tRNA(Val) + L-valine + ATP = L-valyl-tRNA(Val) + AMP + diphosphate. Functionally, catalyzes the attachment of valine to tRNA(Val). As ValRS can inadvertently accommodate and process structurally similar amino acids such as threonine, to avoid such errors, it has a 'posttransfer' editing activity that hydrolyzes mischarged Thr-tRNA(Val) in a tRNA-dependent manner. The protein is Valine--tRNA ligase of Legionella pneumophila (strain Lens).